Reading from the N-terminus, the 3391-residue chain is Genome polyprotein (3391 aa).

An interaction with host EXOC1 region spans residues 1-15 (MNDQRKKAKNTPFNM). The Cytoplasmic portion of the chain corresponds to 1–101 (MNDQRKKAKN…LNILNRRRRS (101 aa)). A hydrophobic; homodimerization of capsid protein C region spans residues 37 to 72 (MLQGRGPLKLYMALVAFLRFLTIPPTAGILKRWGTI). The propeptide at 101–114 (SAGMIIMLIPTVMA) is ER anchor for the capsid protein C, removed in mature form by serine protease NS3. The helical transmembrane segment at 102–119 (AGMIIMLIPTVMAFHLTT) threads the bilayer. The Extracellular portion of the chain corresponds to 120–242 (RNGEPHMIVS…HVQRIETWIL (123 aa)). Residue Asn-183 is glycosylated (N-linked (GlcNAc...) asparagine; by host). Residues 243 to 260 (RHPGFTMMAAILAYTIGT) form a helical membrane-spanning segment. Thr-261 is a topological domain (cytoplasmic). Residues 262–280 (HFQRALIFILLTAVTPSMT) traverse the membrane as a helical segment. The Extracellular segment spans residues 281-725 (MRCIGMSNRD…LHQVFGAIYG (445 aa)). 4 disulfides stabilise this stretch: Cys-283–Cys-310, Cys-340–Cys-401, Cys-354–Cys-385, and Cys-372–Cys-396. N-linked (GlcNAc...) asparagine; by host glycosylation is present at Asn-347. The interval 378-391 (DRGWGNGCGLFGKG) is fusion peptide. The N-linked (GlcNAc...) asparagine; by host glycan is linked to Asn-433. 2 disulfide bridges follow: Cys-465/Cys-565 and Cys-582/Cys-613. The chain crosses the membrane as a helical span at residues 726–746 (AAFSGVSWTMKILIGVIITWI). Residues 747–752 (GMNSRS) lie on the Cytoplasmic side of the membrane. A helical transmembrane segment spans residues 753 to 773 (TSLSVTLVLVGIVTLYLGVMV). Over 774 to 1195 (QADSGCVVSW…MVGATMTDDI (422 aa)) the chain is Extracellular. 6 cysteine pairs are disulfide-bonded: Cys-779–Cys-790, Cys-830–Cys-918, Cys-954–Cys-998, Cys-1055–Cys-1104, Cys-1066–Cys-1088, and Cys-1087–Cys-1091. Residues Asn-905 and Asn-982 are each glycosylated (N-linked (GlcNAc...) asparagine; by host). 2 N-linked (GlcNAc...) asparagine; by host glycosylation sites follow: Asn-1134 and Asn-1174. The chain crosses the membrane as a helical span at residues 1196-1220 (GMGVTYLALLAAFKVRPTFAAGLLL). Residues 1221–1226 (RKLTSK) lie on the Cytoplasmic side of the membrane. A helical membrane pass occupies residues 1227–1245 (ALMMTTIGIVLSSQSTTPE). Topologically, residues 1246–1269 (TILELTDALALGMMVLKMVRNMEK) are lumenal. The chain crosses the membrane as a helical span at residues 1270–1290 (YQLAVTIMAILCVPNAVILQN). Ala-1291 is a topological domain (cytoplasmic). The chain crosses the membrane as a helical span at residues 1292–1310 (WKVSCTILAVVSVSPLFLT). The Lumenal segment spans residues 1311–1317 (SSQQKTD). Residues 1318-1338 (WIPLALTIKGLNPTAIFLTTL) traverse the membrane as a helical segment. Over 1339–1346 (SRTSKKRS) the chain is Cytoplasmic. The chain crosses the membrane as a helical span at residues 1347–1367 (WPLNEAIMAVGMVSILASSLL). Topologically, residues 1368–1370 (KND) are lumenal. The helical transmembrane segment at 1371-1391 (IPMTGPLVAGGPLTVCYVLTG) threads the bilayer. Residues 1392–1447 (RSADLELERAADVKWEDQAEISGSSPILSITISEDGSMSIKNEEEEQTLTILIRTG) lie on the Cytoplasmic side of the membrane. Positions 1398–1437 (LERAADVKWEDQAEISGSSPILSITISEDGSMSIKNEEEE) are interacts with and activates NS3 protease. The helical intramembrane region spans 1448–1468 (LLVISGLFPVSIPITAAAWYL). Topologically, residues 1469-2147 (WEVKKQRAGV…LSELPETLET (679 aa)) are cytoplasmic. One can recognise a Peptidase S7 domain in the interval 1476-1653 (AGVLWDVPSP…EKSIEDNPEI (178 aa)). Residues His-1526, Asp-1550, and Ser-1610 each act as charge relay system; for serine protease NS3 activity in the active site. The Helicase ATP-binding domain occupies 1655–1811 (DDIFRKRRLT…QSNAPIIDEE (157 aa)). An important for RNA-binding region spans residues 1659–1662 (RKRR). 1668-1675 (LHPGAGKT) is an ATP binding site. The DEAH box signature appears at 1759 to 1762 (DEAH). Positions 1821-1988 (SGHEWVTDFK…IIPSMFEPER (168 aa)) constitute a Helicase C-terminal domain. Residue Lys-1863 is modified to N6-acetyllysine; by host. The helical transmembrane segment at 2148-2168 (LLLLTLLATVTGGILLFLMSG) threads the bilayer. At 2169–2170 (RG) the chain is on the lumenal side. An intramembrane region (helical) is located at residues 2171–2191 (IGKMTLGMCCIITASILLWYA). Residue Gln-2192 is a topological domain, lumenal. Residues 2193–2213 (IQPHWIAASIILEFFLIVLLI) form a helical membrane-spanning segment. The Cytoplasmic segment spans residues 2214–2228 (PEPEKQRTPQDNQLT). Residues 2229-2249 (YVVIAILTVVAATMANEMGFL) form a helical membrane-spanning segment. The Lumenal portion of the chain corresponds to 2250–2274 (EKTKKDLGLGSIATQQPESNILDID). Residues 2275-2295 (LRPASAWTLYAVATTFVTPML) constitute an intramembrane region (helical). At 2296–2316 (RHSIENSSVNVSLTAIANQAT) the chain is on the lumenal side. Residues Asn-2301 and Asn-2305 are each glycosylated (N-linked (GlcNAc...) asparagine; by host). Positions 2317–2337 (VLMGLGKGWPLSKMDIGVPLL) form an intramembrane region, helical. The Lumenal segment spans residues 2338 to 2347 (AIGCYSQVNP). A helical membrane pass occupies residues 2348–2368 (TTLTAALFLLVAHYAIIGPAL). Residues 2369–2413 (QAKASREAQKRAAAGIMKNPTVDGITVIDLDPIPYDPKFEKQLGQ) are Cytoplasmic-facing. The chain crosses the membrane as a helical span at residues 2414–2434 (VMLLVLCVTQVLMMRTTWALC). The Lumenal segment spans residues 2435–2459 (EVLTLATGPISTLWEGNPGRFWNTT). A glycan (N-linked (GlcNAc...) asparagine; by host) is linked at Asn-2457. A helical transmembrane segment spans residues 2460-2480 (IAVSMANIFRGSYLAGAGLLF). The Cytoplasmic segment spans residues 2481 to 3391 (SIMKNTTNAR…REEEEAGVLW (911 aa)). The mRNA cap 0-1 NS5-type MT domain maps to 2493-2755 (TGNIGETLGE…DVDLGSGTRN (263 aa)). Residue Ser-2547 coordinates S-adenosyl-L-methionine. Ser-2547 bears the Phosphoserine mark. The active-site For 2'-O-MTase activity is the Lys-2552. The SUMO-interacting motif signature appears at 2568 to 2571 (VVDL). Gly-2577, Trp-2578, Thr-2595, Lys-2596, Asp-2622, and Val-2623 together coordinate S-adenosyl-L-methionine. Asp-2637 functions as the For 2'-O-MTase activity in the catalytic mechanism. Ile-2638 is an S-adenosyl-L-methionine binding site. Catalysis depends on for 2'-O-MTase activity residues Lys-2672 and Glu-2708. Tyr-2710 contacts S-adenosyl-L-methionine. Zn(2+) is bound by residues Glu-2929, His-2933, Cys-2938, and Cys-2941. The region spanning 3020 to 3169 (AMYADDTAGW…PLDDRLPSAL (150 aa)) is the RdRp catalytic domain. His-3203, Cys-3219, and Cys-3338 together coordinate Zn(2+).

In the N-terminal section; belongs to the class I-like SAM-binding methyltransferase superfamily. mRNA cap 0-1 NS5-type methyltransferase family. In terms of assembly, homodimer. Interacts (via N-terminus) with host EXOC1 (via C-terminus); this interaction results in EXOC1 degradation through the proteasome degradation pathway. Forms heterodimers with envelope protein E in the endoplasmic reticulum and Golgi. As to quaternary structure, homodimer; in the endoplasmic reticulum and Golgi. Interacts with protein prM. Interacts with non-structural protein 1. In terms of assembly, homodimer; Homohexamer when secreted. Interacts with envelope protein E. Interacts with host PRKAA1. Interacts (via N-terminus) with serine protease NS3. As to quaternary structure, forms a heterodimer with serine protease NS3. May form homooligomers. In terms of assembly, forms a heterodimer with NS2B. Interacts with NS4B. Interacts with unphosphorylated RNA-directed RNA polymerase NS5; this interaction stimulates RNA-directed RNA polymerase NS5 guanylyltransferase activity. Interacts with host SHFL. Interacts with host MAVS; this interaction inhibits the synthesis of IFN-beta. Interacts with host SHFL. Interacts with host AUP1; the interaction occurs in the presence of Dengue virus NS4B and induces lipophagy which facilitates production of virus progeny particles. May interact with host SRPRA and SEC61G. As to quaternary structure, interacts with serine protease NS3. In terms of assembly, homodimer. Interacts with host STAT2; this interaction inhibits the phosphorylation of the latter, and, when all viral proteins are present (polyprotein), targets STAT2 for degradation. Interacts with serine protease NS3. Interacts with host PAF1 complex; the interaction may prevent the recruitment of the PAF1 complex to interferon-responsive genes, and thus reduces the immune response. In terms of processing, specific enzymatic cleavages in vivo yield mature proteins. Cleavages in the lumen of endoplasmic reticulum are performed by host signal peptidase, whereas cleavages in the cytoplasmic side are performed by serine protease NS3. Signal cleavage at the 2K-4B site requires a prior NS3 protease-mediated cleavage at the 4A-2K site. Post-translationally, cleaved in post-Golgi vesicles by a host furin, releasing the mature small envelope protein M, and peptide pr. This cleavage is incomplete as up to 30% of viral particles still carry uncleaved prM. N-glycosylated. In terms of processing, N-glycosylated. The excreted form is glycosylated and this is required for efficient secretion of the protein from infected cells. Post-translationally, acetylated by host KAT5. Acetylation modulates NS3 RNA-binding and unwinding activities and plays an important positive role for viral replication. Sumoylation of RNA-directed RNA polymerase NS5 increases NS5 protein stability allowing proper viral RNA replication. In terms of processing, phosphorylated on serines residues. This phosphorylation may trigger NS5 nuclear localization.

It localises to the virion. The protein localises to the host nucleus. The protein resides in the host cytoplasm. Its subcellular location is the host perinuclear region. It is found in the secreted. It localises to the virion membrane. The protein localises to the host endoplasmic reticulum membrane. The protein resides in the host mitochondrion. The enzyme catalyses Selective hydrolysis of -Xaa-Xaa-|-Yaa- bonds in which each of the Xaa can be either Arg or Lys and Yaa can be either Ser or Ala.. It catalyses the reaction RNA(n) + a ribonucleoside 5'-triphosphate = RNA(n+1) + diphosphate. The catalysed reaction is a ribonucleoside 5'-triphosphate + H2O = a ribonucleoside 5'-diphosphate + phosphate + H(+). It carries out the reaction ATP + H2O = ADP + phosphate + H(+). The enzyme catalyses a 5'-end (5'-triphosphoguanosine)-ribonucleoside in mRNA + S-adenosyl-L-methionine = a 5'-end (N(7)-methyl 5'-triphosphoguanosine)-ribonucleoside in mRNA + S-adenosyl-L-homocysteine. It catalyses the reaction a 5'-end (N(7)-methyl 5'-triphosphoguanosine)-ribonucleoside in mRNA + S-adenosyl-L-methionine = a 5'-end (N(7)-methyl 5'-triphosphoguanosine)-(2'-O-methyl-ribonucleoside) in mRNA + S-adenosyl-L-homocysteine + H(+). Plays a role in virus budding by binding to the cell membrane and gathering the viral RNA into a nucleocapsid that forms the core of a mature virus particle. During virus entry, may induce genome penetration into the host cytoplasm after hemifusion induced by the surface proteins. Can migrate to the cell nucleus where it modulates host functions. Overcomes the anti-viral effects of host EXOC1 by sequestering and degrading the latter through the proteasome degradation pathway. Its function is as follows. Inhibits RNA silencing by interfering with host Dicer. In terms of biological role, prevents premature fusion activity of envelope proteins in trans-Golgi by binding to envelope protein E at pH6.0. After virion release in extracellular space, gets dissociated from E dimers. Functionally, acts as a chaperone for envelope protein E during intracellular virion assembly by masking and inactivating envelope protein E fusion peptide. prM is the only viral peptide matured by host furin in the trans-Golgi network probably to avoid catastrophic activation of the viral fusion activity in acidic Golgi compartment prior to virion release. prM-E cleavage is inefficient, and many virions are only partially matured. These uncleaved prM would play a role in immune evasion. May play a role in virus budding. Exerts cytotoxic effects by activating a mitochondrial apoptotic pathway through M ectodomain. May display a viroporin activity. Its function is as follows. Binds to host cell surface receptor and mediates fusion between viral and cellular membranes. Envelope protein is synthesized in the endoplasmic reticulum in the form of heterodimer with protein prM. They play a role in virion budding in the ER, and the newly formed immature particle is covered with 60 spikes composed of heterodimer between precursor prM and envelope protein E. The virion is transported to the Golgi apparatus where the low pH causes dissociation of PrM-E heterodimers and formation of E homodimers. prM-E cleavage is inefficient, and many virions are only partially matured. These uncleaved prM would play a role in immune evasion. In terms of biological role, involved in immune evasion, pathogenesis and viral replication. Once cleaved off the polyprotein, is targeted to three destinations: the viral replication cycle, the plasma membrane and the extracellular compartment. Essential for viral replication. Required for formation of the replication complex and recruitment of other non-structural proteins to the ER-derived membrane structures. Excreted as a hexameric lipoparticle that plays a role against host immune response. Antagonizing the complement function. Binds to the host macrophages and dendritic cells. Inhibits signal transduction originating from Toll-like receptor 3 (TLR3). Functionally, involved in immune evasion, pathogenesis and viral replication. Once cleaved off the polyprotein, is targeted to three destinations: the viral replication cycle, the plasma membrane and the extracellular compartment. Essential for viral replication. Required for formation of the replication complex and recruitment of other non-structural proteins to the ER-derived membrane structures. Excreted as a hexameric lipoparticle that plays a role against host immune response. Antagonizing the complement function. Binds to the host macrophages and dendritic cells. Inhibits signal transduction originating from Toll-like receptor 3 (TLR3). Mediates complement activation, which may contribute to the pathogenesis of the vascular leakage that occurs in severe dengue disease. Activates autophagy through the AMPK/ERK/mTOR signaling pathway. Mechanistically, acts as the assembly platform for STK11-AMPK interactions and promotes STK11-AMPK interactions. In turn, promotes phosphorylation of the AMPK kinase structural domain and activates AMPK, thereby positively regulating the AMPK/ERK/mTOR signaling pathway and inducing autophagy. Component of the viral RNA replication complex that functions in virion assembly and antagonizes the host immune response. Its function is as follows. Required cofactor for the serine protease function of NS3. May have membrane-destabilizing activity and form viroporins. In terms of biological role, displays three enzymatic activities: serine protease, NTPase and RNA helicase. NS3 serine protease, in association with NS2B, performs its autocleavage and cleaves the polyprotein at dibasic sites in the cytoplasm: C-prM, NS2A-NS2B, NS2B-NS3, NS3-NS4A, NS4A-2K and NS4B-NS5. NS3 RNA helicase binds RNA and unwinds dsRNA in the 3' to 5' direction. Functionally, regulates the ATPase activity of the NS3 helicase activity. NS4A allows NS3 helicase to conserve energy during unwinding. Plays a role in the inhibition of the host innate immune response. Interacts with host MAVS and thereby prevents the interaction between RIGI and MAVS. In turn, IFN-beta production is impaired. Interacts with host AUP1 which mediates induction of lipophagy in host cells and facilitates production of virus progeny particles. Functions as a signal peptide for NS4B and is required for the interferon antagonism activity of the latter. Its function is as follows. Induces the formation of ER-derived membrane vesicles where the viral replication takes place. Inhibits interferon (IFN)-induced host STAT1 phosphorylation and nuclear translocation, thereby preventing the establishment of cellular antiviral state by blocking the IFN-alpha/beta pathway. In terms of biological role, replicates the viral (+) and (-) RNA genome, and performs the capping of genomes in the cytoplasm. NS5 methylates viral RNA cap at guanine N-7 and ribose 2'-O positions. Besides its role in RNA genome replication, also prevents the establishment of cellular antiviral state by blocking the interferon-alpha/beta (IFN-alpha/beta) signaling pathway. Inhibits host TYK2 and STAT2 phosphorylation, thereby preventing activation of JAK-STAT signaling pathway. May reduce immune responses by preventing the recruitment of the host PAF1 complex to interferon-responsive genes. The sequence is that of Genome polyprotein from Aedes aegypti (Yellowfever mosquito).